A 418-amino-acid chain; its full sequence is AA14 family lytic polysaccharide monooxygenase B (418 aa).

The first 18 residues, 1-18, serve as a signal peptide directing secretion; the sequence is MIPVFLAAVAAFLPLTSG. N-linked (GlcNAc...) asparagine glycosylation is found at N31, N94, and N151. 4 disulfide bridges follow: C85–C108, C127–C154, C171–C176, and C178–C200. Residues N201 and N235 are each glycosylated (N-linked (GlcNAc...) asparagine). A disulfide bridge links C220 with C236. The span at 307-343 shows a compositional bias: low complexity; the sequence is AAATPAPSSSGSSPSSSSPGSSSTASTTSTSGPRPSA. The segment at 307-364 is disordered; sequence AAATPAPSSSGSSPSSSSPGSSSTASTTSTSGPRPSARGFRRSTGERPPTGVPTPRKS.

Belongs to the polysaccharide monooxygenase AA14 family. Requires Cu(2+) as cofactor.

The protein localises to the secreted. Lytic polysaccharide monooxygenase (LPMO) that oxidatively cleaves xylan with both C1 and C4 regioselectivity and that specifically targets the protective shield made by heteroxylans that cover cellulose microfibrils in wood. Catalysis by LPMOs requires the reduction of the active-site copper from Cu(II) to Cu(I) by a reducing agent and H(2)O(2) or O(2) as a cosubstrate. Cleavage occurs only when xylans are bound to cellulose and not when they are in solution. Increases the efficiency of wood saccharification through oxidative cleavage of highly refractory xylan-coated cellulose fibers via synergistic relationship with xylan-active enzymes, xylobiohydrolases and cellobiohydrolases. The protein is AA14 family lytic polysaccharide monooxygenase B of Trametes coccinea (strain BRFM310) (Pycnoporus coccineus).